Consider the following 195-residue polypeptide: Cysteine/O-acetylserine efflux protein (195 aa).

At 1-9 (MTPMLLSAF) the chain is on the periplasmic side. Residues 10–32 (WTYTLITALTPGPNNILALSAAT) form a helical membrane-spanning segment. Over 33–46 (AHGFRQSIRVLAGM) the chain is Cytoplasmic. A helical membrane pass occupies residues 47 to 67 (SLGFLVVMLLCAGIAFSLAVI). Residues 68-69 (DP) lie on the Periplasmic side of the membrane. Residues 70 to 90 (AIIHLLSWVGAAYILWLAWKI) form a helical membrane-spanning segment. Topologically, residues 91-104 (ATSPAADENARPKP) are cytoplasmic. The chain crosses the membrane as a helical span at residues 105–125 (VGFWVSFGLQFVNVKIILYGI). Topologically, residues 126-141 (TALSTFVLPQTQALNW) are periplasmic. The chain crosses the membrane as a helical span at residues 142–162 (VIGVSILLALIGTFGNVCWAL). Over 163–176 (AGHLFQRAFRHYGR) the chain is Cytoplasmic. The helical transmembrane segment at 177-194 (QLNIILALLLVYCAVRIF) threads the bilayer. A topological domain (periplasmic) is located at residue tyrosine 195.

Belongs to the Rht family.

Its subcellular location is the cell inner membrane. The catalysed reaction is O-acetyl-L-serine(in) = O-acetyl-L-serine(out). It carries out the reaction L-cysteine(in) = L-cysteine(out). In terms of biological role, exporter of O-acetylserine (OAS) and cysteine. The chain is Cysteine/O-acetylserine efflux protein (eamB) from Salmonella choleraesuis (strain SC-B67).